The following is a 509-amino-acid chain: 2-isopropylmalate synthase (509 aa).

The Pyruvate carboxyltransferase domain occupies 5–267 (IQIFDTTLRD…QTALNLEETK (263 aa)). The Mn(2+) site is built by Asp14, His202, His204, and Asn238. Positions 391-509 (KLETLQLQYV…AAENVEKVGN (119 aa)) are regulatory domain.

This sequence belongs to the alpha-IPM synthase/homocitrate synthase family. LeuA type 1 subfamily. As to quaternary structure, homodimer. The cofactor is Mn(2+).

The protein resides in the cytoplasm. The catalysed reaction is 3-methyl-2-oxobutanoate + acetyl-CoA + H2O = (2S)-2-isopropylmalate + CoA + H(+). The protein operates within amino-acid biosynthesis; L-leucine biosynthesis; L-leucine from 3-methyl-2-oxobutanoate: step 1/4. Its function is as follows. Catalyzes the condensation of the acetyl group of acetyl-CoA with 3-methyl-2-oxobutanoate (2-ketoisovalerate) to form 3-carboxy-3-hydroxy-4-methylpentanoate (2-isopropylmalate). This chain is 2-isopropylmalate synthase, found in Staphylococcus aureus (strain USA300).